The sequence spans 369 residues: Cytoplasmic tRNA 2-thiolation protein 1 (369 aa).

It belongs to the TtcA family. CTU1/NCS6/ATPBD3 subfamily.

The protein localises to the cytoplasm. Its pathway is tRNA modification; 5-methoxycarbonylmethyl-2-thiouridine-tRNA biosynthesis. Functionally, plays a central role in 2-thiolation of mcm(5)S(2)U at tRNA wobble positions of tRNA(Lys), tRNA(Glu) and tRNA(Gln). Directly binds tRNAs and probably acts by catalyzing adenylation of tRNAs, an intermediate required for 2-thiolation. It is unclear whether it acts as a sulfurtransferase that transfers sulfur from thiocarboxylated URM1 onto the uridine of tRNAs at wobble position. Prior mcm(5) tRNA modification by the elongator complex is required for 2-thiolation. May also be involved in protein urmylation. The chain is Cytoplasmic tRNA 2-thiolation protein 1 from Cryptococcus neoformans var. neoformans serotype D (strain JEC21 / ATCC MYA-565) (Filobasidiella neoformans).